Here is a 347-residue protein sequence, read N- to C-terminus: Putative coenzyme F420-dependent oxidoreductase Rv3520c (347 aa).

The polypeptide is Putative coenzyme F420-dependent oxidoreductase Rv3520c (Mycobacterium tuberculosis (strain ATCC 25618 / H37Rv)).